We begin with the raw amino-acid sequence, 291 residues long: 2-dehydro-3-deoxyphosphooctonate aldolase 2 (291 aa).

Ala-2 bears the N-acetylalanine mark.

It belongs to the KdsA family. Expressed in roots, apical meristem, emerging leaves, hydathodes of young leaves, styles of mature flowers and funicules of mature siliques.

Its subcellular location is the cytoplasm. It catalyses the reaction D-arabinose 5-phosphate + phosphoenolpyruvate + H2O = 3-deoxy-alpha-D-manno-2-octulosonate-8-phosphate + phosphate. Functionally, catalyzes the stereospecific condensation of D-arabinose 5-phosphate and phosphoenolpyruvate to form 3-deoxy-D-manno-octulosonate 8-phosphate (KDO-8-phosphate) and inorganic phosphate. Involved in the biosynthesis of 3-deoxy-D-manno-octulosonate (KDO) which is an indispensable component of rhamnogalacturonan II (RG-II), a structurally complex pectic polysaccharide of the primary cell wall. RG-II is essential for the cell wall integrity of rapidly growing tissues and pollen tube growth and elongation. The polypeptide is 2-dehydro-3-deoxyphosphooctonate aldolase 2 (KDSA2) (Arabidopsis thaliana (Mouse-ear cress)).